Here is a 165-residue protein sequence, read N- to C-terminus: Protein SprT (165 aa).

Positions 22–163 (LAQANLKLGC…RCVHCGEQLV (142 aa)) constitute a SprT-like domain. Histidine 78 serves as a coordination point for Zn(2+). Glutamate 79 is an active-site residue. Histidine 82 is a binding site for Zn(2+).

The protein belongs to the SprT family. The cofactor is Zn(2+).

Its subcellular location is the cytoplasm. In Shigella dysenteriae serotype 1 (strain Sd197), this protein is Protein SprT.